The sequence spans 109 residues: Putative double-stranded DNA mimic protein YciU (109 aa).

It belongs to the putative dsDNA mimic protein family.

May act as a double-stranded DNA (dsDNA) mimic. Probably regulates the activity of a dsDNA-binding protein. The polypeptide is Putative double-stranded DNA mimic protein YciU (Salmonella arizonae (strain ATCC BAA-731 / CDC346-86 / RSK2980)).